A 230-amino-acid polypeptide reads, in one-letter code: Ureidoacrylate amidohydrolase RutB (230 aa).

Asp-24 functions as the Proton acceptor in the catalytic mechanism. Lys-133 is an active-site residue. The active-site Nucleophile is the Cys-166.

It belongs to the isochorismatase family. RutB subfamily.

It carries out the reaction (Z)-3-ureidoacrylate + H2O + H(+) = (Z)-3-aminoacrylate + NH4(+) + CO2. The catalysed reaction is (Z)-3-ureidoacrylate + H2O = (Z)-3-aminoacrylate + carbamate + H(+). The enzyme catalyses (Z)-2-methylureidoacrylate + H2O + H(+) = (Z)-2-methylaminoacrylate + NH4(+) + CO2. Hydrolyzes ureidoacrylate to form aminoacrylate and carbamate. The carbamate hydrolyzes spontaneously, thereby releasing one of the nitrogen atoms of the pyrimidine ring as ammonia and one of its carbon atoms as CO2. This chain is Ureidoacrylate amidohydrolase RutB, found in Escherichia coli (strain K12 / MC4100 / BW2952).